Reading from the N-terminus, the 392-residue chain is CCA-adding enzyme (392 aa).

ATP is bound by residues serine 45 and lysine 48. CTP is bound by residues serine 45 and lysine 48. Residues aspartate 55, aspartate 57, and glutamate 106 each coordinate Mg(2+). The ATP site is built by histidine 129, lysine 148, and tyrosine 157. 3 residues coordinate CTP: histidine 129, lysine 148, and tyrosine 157.

This sequence belongs to the tRNA nucleotidyltransferase/poly(A) polymerase family. Archaeal CCA-adding enzyme subfamily. In terms of assembly, homodimer. It depends on Mg(2+) as a cofactor.

It catalyses the reaction a tRNA precursor + 2 CTP + ATP = a tRNA with a 3' CCA end + 3 diphosphate. It carries out the reaction a tRNA with a 3' CCA end + 2 CTP + ATP = a tRNA with a 3' CCACCA end + 3 diphosphate. Its function is as follows. Catalyzes the addition and repair of the essential 3'-terminal CCA sequence in tRNAs without using a nucleic acid template. Adds these three nucleotides in the order of C, C, and A to the tRNA nucleotide-73, using CTP and ATP as substrates and producing inorganic pyrophosphate. tRNA 3'-terminal CCA addition is required both for tRNA processing and repair. Also involved in tRNA surveillance by mediating tandem CCA addition to generate a CCACCA at the 3' terminus of unstable tRNAs. While stable tRNAs receive only 3'-terminal CCA, unstable tRNAs are marked with CCACCA and rapidly degraded. The chain is CCA-adding enzyme from Nanoarchaeum equitans (strain Kin4-M).